Here is a 569-residue protein sequence, read N- to C-terminus: Dihydroxy-acid dehydratase (569 aa).

Cys61 is a binding site for [2Fe-2S] cluster. Residue Asp93 participates in Mg(2+) binding. Cys134 is a binding site for [2Fe-2S] cluster. Positions 135 and 136 each coordinate Mg(2+). N6-carboxylysine is present on Lys136. Cys211 is a binding site for [2Fe-2S] cluster. Position 462 (Glu462) interacts with Mg(2+). The active-site Proton acceptor is Ser488.

It belongs to the IlvD/Edd family. Homodimer. [2Fe-2S] cluster serves as cofactor. Mg(2+) is required as a cofactor.

It catalyses the reaction (2R)-2,3-dihydroxy-3-methylbutanoate = 3-methyl-2-oxobutanoate + H2O. It carries out the reaction (2R,3R)-2,3-dihydroxy-3-methylpentanoate = (S)-3-methyl-2-oxopentanoate + H2O. It functions in the pathway amino-acid biosynthesis; L-isoleucine biosynthesis; L-isoleucine from 2-oxobutanoate: step 3/4. It participates in amino-acid biosynthesis; L-valine biosynthesis; L-valine from pyruvate: step 3/4. Functions in the biosynthesis of branched-chain amino acids. Catalyzes the dehydration of (2R,3R)-2,3-dihydroxy-3-methylpentanoate (2,3-dihydroxy-3-methylvalerate) into 2-oxo-3-methylpentanoate (2-oxo-3-methylvalerate) and of (2R)-2,3-dihydroxy-3-methylbutanoate (2,3-dihydroxyisovalerate) into 2-oxo-3-methylbutanoate (2-oxoisovalerate), the penultimate precursor to L-isoleucine and L-valine, respectively. The chain is Dihydroxy-acid dehydratase from Tropheryma whipplei (strain Twist) (Whipple's bacillus).